The sequence spans 407 residues: Betaine--homocysteine S-methyltransferase 1 (407 aa).

In terms of domain architecture, Hcy-binding spans 11 to 314; it reads KGILERLNSG…YHIRAIAEEL (304 aa). Residues lysine 40, lysine 93, and lysine 98 each carry the N6-succinyllysine modification. Position 217 (cysteine 217) interacts with Zn(2+). N6-succinyllysine occurs at positions 232 and 241. Zn(2+) is bound by residues cysteine 299 and cysteine 300. Serine 330 carries the phosphoserine modification. Lysine 340 and lysine 377 each carry N6-succinyllysine.

As to quaternary structure, homotetramer. Requires Zn(2+) as cofactor.

It localises to the cytoplasm. The protein resides in the cytosol. It is found in the nucleus. It carries out the reaction L-homocysteine + glycine betaine = N,N-dimethylglycine + L-methionine. Its pathway is amine and polyamine degradation; betaine degradation; sarcosine from betaine: step 1/2. It functions in the pathway amino-acid biosynthesis; L-methionine biosynthesis via de novo pathway; L-methionine from L-homocysteine (BhmT route): step 1/1. In terms of biological role, involved in the regulation of homocysteine metabolism. Converts betaine and homocysteine to dimethylglycine and methionine, respectively. This reaction is also required for the irreversible oxidation of choline. The protein is Betaine--homocysteine S-methyltransferase 1 (BHMT) of Bos taurus (Bovine).